The chain runs to 253 residues: Sortase SrtE2 (253 aa).

A compositionally biased stretch (basic and acidic residues) spans 1–11; the sequence is MAATTDTEHQE. The disordered stretch occupies residues 1–23; that stretch reads MAATTDTEHQEQAGTGGRGRRRP. Residues 30–50 form a helical membrane-spanning segment; it reads AVSVLGELLITAGLVMGLFVV. Residues 69–89 are disordered; it reads EKVRDDWAQDRVGGSGQDGPG. Cys-220 is a catalytic residue.

This sequence belongs to the bacterial sortase family. Class E subfamily.

Its subcellular location is the cell membrane. It carries out the reaction The enzyme catalyzes a cell wall sorting reaction in which a surface protein with a sorting signal containing a LPXTG motif is cleaved between the Thr and Gly residue. The resulting threonine carboxyl end of the protein is covalently attached to a pentaglycine cross-bridge of peptidoglycan.. Functionally, transpeptidase that anchors surface proteins to the cell wall. Recognizes Leu-Ala-x-Thr-Gly and Leu-Pro-x-Thr-Gly, with a preference for the former. Unlike the S.aureus sortase it cleaves not only the Thr-Gly motif but also the Ala-X bond; an Ala-Glu bond is a better substrate than the Thr-Gly motif in vitro. Among its possible substrates are the chaplins ChpA, ChpB and ChpC; this enzyme is more important for ChpC attachment than is SrtE1. A double knockout mutant of srtE1 and srtE2 shows a developmental defect in aerial hyphae formation more dramatic than that due to chaplin deletion. This chain is Sortase SrtE2, found in Streptomyces coelicolor (strain ATCC BAA-471 / A3(2) / M145).